The chain runs to 711 residues: Polyribonucleotide nucleotidyltransferase (711 aa).

Mg(2+) contacts are provided by D486 and D492. The 60-residue stretch at 553–612 folds into the KH domain; sequence PRIHTIKINPDKIKDVIGKGGSVIRALTEETGTTIEIEDDGTVKIAATDGDKAQHAIRRI. Positions 622–690 constitute an S1 motif domain; sequence GRIYNGKVTR…RQGRVRLSIK (69 aa). The disordered stretch occupies residues 691–711; it reads EATEQTPSAAAPEAPVAEQGE. The span at 699 to 711 shows a compositional bias: low complexity; the sequence is AAAPEAPVAEQGE.

This sequence belongs to the polyribonucleotide nucleotidyltransferase family. Component of the RNA degradosome, which is a multiprotein complex involved in RNA processing and mRNA degradation. Mg(2+) serves as cofactor.

It localises to the cytoplasm. The enzyme catalyses RNA(n+1) + phosphate = RNA(n) + a ribonucleoside 5'-diphosphate. In terms of biological role, involved in mRNA degradation. Catalyzes the phosphorolysis of single-stranded polyribonucleotides processively in the 3'- to 5'-direction. In Klebsiella pneumoniae (strain 342), this protein is Polyribonucleotide nucleotidyltransferase.